A 106-amino-acid polypeptide reads, in one-letter code: ATP-dependent Clp protease adapter protein ClpS (106 aa).

Residues 1-20 (MKVDMSTSVKDDAQLEASRV) form a disordered region.

The protein belongs to the ClpS family. As to quaternary structure, binds to the N-terminal domain of the chaperone ClpA.

In terms of biological role, involved in the modulation of the specificity of the ClpAP-mediated ATP-dependent protein degradation. The chain is ATP-dependent Clp protease adapter protein ClpS from Chromobacterium violaceum (strain ATCC 12472 / DSM 30191 / JCM 1249 / CCUG 213 / NBRC 12614 / NCIMB 9131 / NCTC 9757 / MK).